We begin with the raw amino-acid sequence, 199 residues long: NAD(P)H dehydrogenase (quinone) (199 aa).

In terms of domain architecture, Flavodoxin-like spans Ile4–Val190. FMN contacts are provided by residues Ser10 to Ile15 and Thr79 to Phe81. Tyr12 is an NAD(+) binding site. Residue Trp99 participates in substrate binding. Residues Ser114–Gly119 and His134 contribute to the FMN site.

Belongs to the WrbA family. The cofactor is FMN.

The enzyme catalyses a quinone + NADH + H(+) = a quinol + NAD(+). It catalyses the reaction a quinone + NADPH + H(+) = a quinol + NADP(+). The polypeptide is NAD(P)H dehydrogenase (quinone) (Yersinia enterocolitica serotype O:8 / biotype 1B (strain NCTC 13174 / 8081)).